The primary structure comprises 109 residues: Large ribosomal subunit protein uL22 (109 aa).

This sequence belongs to the universal ribosomal protein uL22 family. As to quaternary structure, part of the 50S ribosomal subunit.

This protein binds specifically to 23S rRNA; its binding is stimulated by other ribosomal proteins, e.g. L4, L17, and L20. It is important during the early stages of 50S assembly. It makes multiple contacts with different domains of the 23S rRNA in the assembled 50S subunit and ribosome. Its function is as follows. The globular domain of the protein is located near the polypeptide exit tunnel on the outside of the subunit, while an extended beta-hairpin is found that lines the wall of the exit tunnel in the center of the 70S ribosome. This chain is Large ribosomal subunit protein uL22, found in Laribacter hongkongensis (strain HLHK9).